Consider the following 80-residue polypeptide: Large ribosomal subunit protein bL31B (80 aa).

Belongs to the bacterial ribosomal protein bL31 family. Type B subfamily. In terms of assembly, part of the 50S ribosomal subunit.

The sequence is that of Large ribosomal subunit protein bL31B from Oenococcus oeni (strain ATCC BAA-331 / PSU-1).